Reading from the N-terminus, the 413-residue chain is MLGVIADDFTGASDIASFLVENGLSTVQMNGVPTQSLNSKVDAIVISLKSRSNPVNEAIEQSLRAYQWLKENGCTQFYFKYCSTFDSTAKGNIGPVTDALLDELNEDFTVITPALPVNGRTIFNGYLFVGDVLLSESGMKNHPITPMVDANLMRLMDAQAKGKTGLVAYADVIKGASRVQECFAELKAQGYRYAVVDAVDNSQLEVLAEAVADFKLVTGGSGLGAYMAARLSGGKKGTNAFTPTKGKTVVLSGSCSVMTNKQVEKYREKAPHFQLDVEQAIHNENYIEQLYQWVIANLDSEFAPMVYATVPPDALKAIQHQFGVDQASHAIENTFAKLAAKLKQYGVTNFITAGGETSSIVVQELGFTGFHIGKQIAPGVPWLKAVEEDIFLALKSGNFGKEDFFEYAQGMFL.

Residues S254, 354–357, and G397 each bind ATP; that span reads GGET.

The protein belongs to the four-carbon acid sugar kinase family.

The catalysed reaction is 3-dehydro-L-erythronate + ATP = 3-dehydro-4-O-phospho-L-erythronate + ADP + H(+). It catalyses the reaction 3-dehydro-D-erythronate + ATP = 3-dehydro-4-O-phospho-D-erythronate + ADP + H(+). Catalyzes the ATP-dependent phosphorylation of 3-oxo-tetronate to 3-oxo-tetronate 4-phosphate. The protein is 3-oxo-tetronate kinase of Haemophilus influenzae (strain ATCC 51907 / DSM 11121 / KW20 / Rd).